We begin with the raw amino-acid sequence, 284 residues long: Bifunctional protein FolD (284 aa).

NADP(+) is bound by residues Gly165–Ser167 and Ser190.

It belongs to the tetrahydrofolate dehydrogenase/cyclohydrolase family. Homodimer.

It catalyses the reaction (6R)-5,10-methylene-5,6,7,8-tetrahydrofolate + NADP(+) = (6R)-5,10-methenyltetrahydrofolate + NADPH. The enzyme catalyses (6R)-5,10-methenyltetrahydrofolate + H2O = (6R)-10-formyltetrahydrofolate + H(+). The protein operates within one-carbon metabolism; tetrahydrofolate interconversion. In terms of biological role, catalyzes the oxidation of 5,10-methylenetetrahydrofolate to 5,10-methenyltetrahydrofolate and then the hydrolysis of 5,10-methenyltetrahydrofolate to 10-formyltetrahydrofolate. In Streptococcus equi subsp. zooepidemicus (strain MGCS10565), this protein is Bifunctional protein FolD.